A 236-amino-acid polypeptide reads, in one-letter code: 2-C-methyl-D-erythritol 4-phosphate cytidylyltransferase (236 aa).

This sequence belongs to the IspD/TarI cytidylyltransferase family. IspD subfamily. In terms of assembly, homodimer.

The catalysed reaction is 2-C-methyl-D-erythritol 4-phosphate + CTP + H(+) = 4-CDP-2-C-methyl-D-erythritol + diphosphate. It participates in isoprenoid biosynthesis; isopentenyl diphosphate biosynthesis via DXP pathway; isopentenyl diphosphate from 1-deoxy-D-xylulose 5-phosphate: step 2/6. In terms of biological role, catalyzes the formation of 4-diphosphocytidyl-2-C-methyl-D-erythritol from CTP and 2-C-methyl-D-erythritol 4-phosphate (MEP). The protein is 2-C-methyl-D-erythritol 4-phosphate cytidylyltransferase of Salmonella paratyphi C (strain RKS4594).